We begin with the raw amino-acid sequence, 57 residues long: Putative secreted protein MT0250 (57 aa).

The first 32 residues, 1–32 (MNRIVAPAAASVVVGLLLGAAAIFGVTLMVQQ), serve as a signal peptide directing secretion. The disordered stretch occupies residues 34–57 (KKPPLPGGDPSSSVLNRVEYGNRS).

The protein is Putative secreted protein MT0250 of Mycobacterium tuberculosis (strain CDC 1551 / Oshkosh).